A 412-amino-acid polypeptide reads, in one-letter code: Probable tRNA pseudouridine synthase D (412 aa).

Asp97 functions as the Nucleophile in the catalytic mechanism. Residues 167-370 (ALPNYYGYQR…YGGYRKVVLT (204 aa)) enclose the TRUD domain.

This sequence belongs to the pseudouridine synthase TruD family.

The catalysed reaction is uridine(13) in tRNA = pseudouridine(13) in tRNA. Could be responsible for synthesis of pseudouridine from uracil-13 in transfer RNAs. The polypeptide is Probable tRNA pseudouridine synthase D (Pyrobaculum islandicum (strain DSM 4184 / JCM 9189 / GEO3)).